The sequence spans 256 residues: Thiazole synthase (256 aa).

Catalysis depends on Lys95, which acts as the Schiff-base intermediate with DXP. 1-deoxy-D-xylulose 5-phosphate-binding positions include Gly156, Ala182–Gly183, and Asn204–Thr205.

The protein belongs to the ThiG family. Homotetramer. Forms heterodimers with either ThiH or ThiS.

It localises to the cytoplasm. The enzyme catalyses [ThiS sulfur-carrier protein]-C-terminal-Gly-aminoethanethioate + 2-iminoacetate + 1-deoxy-D-xylulose 5-phosphate = [ThiS sulfur-carrier protein]-C-terminal Gly-Gly + 2-[(2R,5Z)-2-carboxy-4-methylthiazol-5(2H)-ylidene]ethyl phosphate + 2 H2O + H(+). The protein operates within cofactor biosynthesis; thiamine diphosphate biosynthesis. Its function is as follows. Catalyzes the rearrangement of 1-deoxy-D-xylulose 5-phosphate (DXP) to produce the thiazole phosphate moiety of thiamine. Sulfur is provided by the thiocarboxylate moiety of the carrier protein ThiS. In vitro, sulfur can be provided by H(2)S. The chain is Thiazole synthase from Enterobacter sp. (strain 638).